A 271-amino-acid polypeptide reads, in one-letter code: Pyrroline-5-carboxylate reductase (271 aa).

It belongs to the pyrroline-5-carboxylate reductase family.

The protein resides in the cytoplasm. The catalysed reaction is L-proline + NADP(+) = (S)-1-pyrroline-5-carboxylate + NADPH + 2 H(+). It catalyses the reaction L-proline + NAD(+) = (S)-1-pyrroline-5-carboxylate + NADH + 2 H(+). The protein operates within amino-acid biosynthesis; L-proline biosynthesis; L-proline from L-glutamate 5-semialdehyde: step 1/1. In terms of biological role, catalyzes the reduction of 1-pyrroline-5-carboxylate (PCA) to L-proline. This Staphylococcus aureus (strain Mu50 / ATCC 700699) protein is Pyrroline-5-carboxylate reductase.